The primary structure comprises 201 residues: MSYVPIVIEPTSRGERAYDIYSRLLKERIIFVCSTVEDHMANLIVAQLLFLEAENPKKDIYMYINSPGGVVTAGLAIYDTMQYIKPKVATLCIGQACSMGSLLLCGGEKGMRYSLPHSRIMIHQPSGGYKGQATDIEIHAQETLKIKRLLNELYSKHTEQELKHIEKSMERDNFMSPEEAKKFGLVDNIMSSRDAMALLAK.

S98 serves as the catalytic Nucleophile. H123 is a catalytic residue.

Belongs to the peptidase S14 family. As to quaternary structure, fourteen ClpP subunits assemble into 2 heptameric rings which stack back to back to give a disk-like structure with a central cavity, resembling the structure of eukaryotic proteasomes.

The protein resides in the cytoplasm. The enzyme catalyses Hydrolysis of proteins to small peptides in the presence of ATP and magnesium. alpha-casein is the usual test substrate. In the absence of ATP, only oligopeptides shorter than five residues are hydrolyzed (such as succinyl-Leu-Tyr-|-NHMec, and Leu-Tyr-Leu-|-Tyr-Trp, in which cleavage of the -Tyr-|-Leu- and -Tyr-|-Trp bonds also occurs).. Functionally, cleaves peptides in various proteins in a process that requires ATP hydrolysis. Has a chymotrypsin-like activity. Plays a major role in the degradation of misfolded proteins. The sequence is that of ATP-dependent Clp protease proteolytic subunit from Rickettsia conorii (strain ATCC VR-613 / Malish 7).